Here is a 149-residue protein sequence, read N- to C-terminus: General odorant-binding protein 57c (149 aa).

The first 16 residues, M1–S16, serve as a signal peptide directing secretion. Cystine bridges form between C32–C70, C66–C117, and C106–C126.

It belongs to the PBP/GOBP family.

Its function is as follows. Present in the aqueous fluid surrounding olfactory sensory dendrites and are thought to aid in the capture and transport of hydrophobic odorants into and through this fluid. The sequence is that of General odorant-binding protein 57c from Drosophila melanogaster (Fruit fly).